A 26-amino-acid chain; its full sequence is Nicotinic acetylcholine receptor-binding protein Mnn-1A (26 aa).

C3 and C22 are oxidised to a cystine.

Belongs to the three-finger toxin family. Short-chain subfamily. As to expression, expressed by the venom gland.

The protein localises to the secreted. In terms of biological role, binds and may inhibit nicotinic acetylcholine receptors (nAChR). The protein is Nicotinic acetylcholine receptor-binding protein Mnn-1A of Micrurus nigrocinctus (Central American coral snake).